The following is a 100-amino-acid chain: Integration host factor subunit alpha (100 aa).

It belongs to the bacterial histone-like protein family. Heterodimer of an alpha and a beta chain.

This protein is one of the two subunits of integration host factor, a specific DNA-binding protein that functions in genetic recombination as well as in transcriptional and translational control. This chain is Integration host factor subunit alpha, found in Rhizorhabdus wittichii (strain DSM 6014 / CCUG 31198 / JCM 15750 / NBRC 105917 / EY 4224 / RW1) (Sphingomonas wittichii).